A 68-amino-acid polypeptide reads, in one-letter code: Large ribosomal subunit protein uL29 (68 aa).

It belongs to the universal ribosomal protein uL29 family.

The polypeptide is Large ribosomal subunit protein uL29 (Streptococcus sanguinis (strain SK36)).